The chain runs to 509 residues: ATP synthase subunit alpha (509 aa).

Gly-169 to Thr-176 is a binding site for ATP.

This sequence belongs to the ATPase alpha/beta chains family. As to quaternary structure, F-type ATPases have 2 components, CF(1) - the catalytic core - and CF(0) - the membrane proton channel. CF(1) has five subunits: alpha(3), beta(3), gamma(1), delta(1), epsilon(1). CF(0) has four main subunits: a(1), b(1), b'(1) and c(9-12).

The protein resides in the cellular chromatophore membrane. It catalyses the reaction ATP + H2O + 4 H(+)(in) = ADP + phosphate + 5 H(+)(out). Its function is as follows. Produces ATP from ADP in the presence of a proton gradient across the membrane. The alpha chain is a regulatory subunit. In Rhodobacter capsulatus (Rhodopseudomonas capsulata), this protein is ATP synthase subunit alpha.